The following is a 756-amino-acid chain: Putative DNA ligase 052L (756 aa).

The N6-AMP-lysine intermediate role is filled by K103. A compositionally biased stretch (low complexity) spans 610 to 620 (PSAAGSASPCR). Positions 610–630 (PSAAGSASPCRPTKRRDDWFD) are disordered. The 95-residue stretch at 648–742 (KKRPPMQGYV…LKRQRKCRAR (95 aa)) folds into the BRCT domain.

Belongs to the NAD-dependent DNA ligase family.

It catalyses the reaction NAD(+) + (deoxyribonucleotide)n-3'-hydroxyl + 5'-phospho-(deoxyribonucleotide)m = (deoxyribonucleotide)n+m + AMP + beta-nicotinamide D-nucleotide.. In terms of biological role, catalyzes the formation of phosphodiester linkages between 5'-phosphoryl and 3'-hydroxyl groups in double-stranded DNA using NAD as a coenzyme and as the energy source for the reaction. The chain is Putative DNA ligase 052L from Invertebrate iridescent virus 3 (IIV-3).